The primary structure comprises 354 residues: Uroporphyrinogen decarboxylase (354 aa).

Residues 25–29 (RQAGR), Asp-75, Tyr-152, Thr-207, and His-330 contribute to the substrate site.

The protein belongs to the uroporphyrinogen decarboxylase family. In terms of assembly, homodimer.

The protein localises to the cytoplasm. It catalyses the reaction uroporphyrinogen III + 4 H(+) = coproporphyrinogen III + 4 CO2. It functions in the pathway porphyrin-containing compound metabolism; protoporphyrin-IX biosynthesis; coproporphyrinogen-III from 5-aminolevulinate: step 4/4. In terms of biological role, catalyzes the decarboxylation of four acetate groups of uroporphyrinogen-III to yield coproporphyrinogen-III. This chain is Uroporphyrinogen decarboxylase, found in Xanthomonas oryzae pv. oryzae (strain PXO99A).